The sequence spans 181 residues: Ninjurin-B (181 aa).

Over residues 1 to 10 (MDSGEVKISL) the composition is skewed to basic and acidic residues. The interval 1–72 (MDSGEVKISL…SNKKCSSDLS (72 aa)) is disordered. Over 1 to 115 (MDSGEVKISL…YNDKASTYIY (115 aa)) the chain is Extracellular. The segment covering 12-26 (DSPSSGESFASTTSG) has biased composition (polar residues). Positions 33–49 (RDLDIQVHESHIKDDQF) are enriched in basic and acidic residues. The segment at 80-91 (NKNVAEGLMDIA) is helix alpha1. The interval 94–110 (SANANQLRFLITYNDKA) is helix alpha2. A helical membrane pass occupies residues 116–136 (SMIMVILSLVLQLLVGIMLIF). Over 137 to 153 (KRRLKRFRNRSYERTND) the chain is Cytoplasmic. Residues 154–174 (LLVMGVFMITVINILLAAFTT) form a helical membrane-spanning segment. Topologically, residues 175-181 (TDGGGSH) are extracellular.

This sequence belongs to the ninjurin family.

It localises to the membrane. Effector of non-apoptotic necrotic cell death that mediates plasma membrane rupture (cytolysis): oligomerizes in response to death stimuli and promotes plasma membrane rupture by introducing hydrophilic faces of 2 alpha helices into the hydrophobic membrane, leading to release intracellular molecules that propagate the inflammatory response. Also acts as a homophilic transmembrane adhesion molecule that promotes cell adhesion by mediating homophilic interactions via its extracellular region. This is Ninjurin-B from Drosophila melanogaster (Fruit fly).